Here is a 411-residue protein sequence, read N- to C-terminus: BRO1 domain-containing protein BROX (411 aa).

Residues Phe90–Cys408 form the BRO1 domain. Basic and acidic residues predominate over residues Leu375–Lys404. The interval Leu375 to Ser411 is disordered. Cys408 bears the Cysteine methyl ester mark. The S-farnesyl cysteine moiety is linked to residue Cys408. A propeptide spans Ser409–Ser411 (removed in mature form).

This sequence belongs to the BROX family. As to quaternary structure, monomer. Interacts with CHMP4B. Interacts with CHMP5: this interaction allows the recruitment of BROX to cellular membranes. Interacts with SYN2; this interaction promotes SYN2 ubiquitination and facilitates the relaxation of mechanical stress imposed by compressive actin fibers at the rupture site. Post-translationally, farnesylation is required for nuclear envelope localization.

It is found in the nucleus membrane. Nuclear envelope-associated factor that is involved in the nuclear envelope ruptures during interphase (NERDI) repair, where it is locally recruited by CHMP5 and reduces cytoskeletal stress through its action on SYN2 to help reseal the ruptured membrane. This chain is BRO1 domain-containing protein BROX, found in Mus musculus (Mouse).